Reading from the N-terminus, the 632-residue chain is 1-deoxy-D-xylulose-5-phosphate synthase (632 aa).

Thiamine diphosphate is bound by residues histidine 75 and 117–119 (GHA). Aspartate 146 lines the Mg(2+) pocket. Thiamine diphosphate is bound by residues 147 to 148 (AA), asparagine 175, and glutamate 370. Residue asparagine 175 participates in Mg(2+) binding.

Belongs to the transketolase family. DXPS subfamily. As to quaternary structure, homodimer. Mg(2+) serves as cofactor. Requires thiamine diphosphate as cofactor.

The enzyme catalyses D-glyceraldehyde 3-phosphate + pyruvate + H(+) = 1-deoxy-D-xylulose 5-phosphate + CO2. The protein operates within metabolic intermediate biosynthesis; 1-deoxy-D-xylulose 5-phosphate biosynthesis; 1-deoxy-D-xylulose 5-phosphate from D-glyceraldehyde 3-phosphate and pyruvate: step 1/1. Its function is as follows. Catalyzes the acyloin condensation reaction between C atoms 2 and 3 of pyruvate and glyceraldehyde 3-phosphate to yield 1-deoxy-D-xylulose-5-phosphate (DXP). This is 1-deoxy-D-xylulose-5-phosphate synthase from Chlamydia muridarum (strain MoPn / Nigg).